The following is a 192-amino-acid chain: Fe/S biogenesis protein NfuA (192 aa).

Cys-149 and Cys-152 together coordinate [4Fe-4S] cluster.

It belongs to the NfuA family. Homodimer. [4Fe-4S] cluster serves as cofactor.

In terms of biological role, involved in iron-sulfur cluster biogenesis. Binds a 4Fe-4S cluster, can transfer this cluster to apoproteins, and thereby intervenes in the maturation of Fe/S proteins. Could also act as a scaffold/chaperone for damaged Fe/S proteins. The protein is Fe/S biogenesis protein NfuA of Shewanella halifaxensis (strain HAW-EB4).